A 327-amino-acid polypeptide reads, in one-letter code: Glycoprotein integral membrane protein 1 (327 aa).

The N-terminal stretch at 1 to 23 (MEGGLSAPLSVRLLLFIALPAAG) is a signal peptide. Residues 24–259 (WLTTNAPRPP…LCRFWSSVVP (236 aa)) are Extracellular-facing. 3 N-linked (GlcNAc...) asparagine glycosylation sites follow: Asn44, Asn62, and Asn146. Residues 260-280 (VLFMFLDVMVVGVLGAAGVIA) traverse the membrane as a helical segment. Topologically, residues 281-327 (VLKLLFPVCENKGILQVDKMNGISVPIILYPDGSEKTAQKLTDKTDI) are cytoplasmic.

It localises to the membrane. This Mus musculus (Mouse) protein is Glycoprotein integral membrane protein 1 (Ginm1).